A 131-amino-acid polypeptide reads, in one-letter code: Small ribosomal subunit protein uS8 (131 aa).

It belongs to the universal ribosomal protein uS8 family. Part of the 30S ribosomal subunit. Contacts proteins S5 and S12.

One of the primary rRNA binding proteins, it binds directly to 16S rRNA central domain where it helps coordinate assembly of the platform of the 30S subunit. The sequence is that of Small ribosomal subunit protein uS8 from Malacoplasma penetrans (strain HF-2) (Mycoplasma penetrans).